Reading from the N-terminus, the 346-residue chain is Uroporphyrinogen decarboxylase (346 aa).

Residues 23–27 (RQAGR), D73, Y151, S206, and H321 contribute to the substrate site.

This sequence belongs to the uroporphyrinogen decarboxylase family. As to quaternary structure, homodimer.

The protein localises to the cytoplasm. The enzyme catalyses uroporphyrinogen III + 4 H(+) = coproporphyrinogen III + 4 CO2. Its pathway is porphyrin-containing compound metabolism; protoporphyrin-IX biosynthesis; coproporphyrinogen-III from 5-aminolevulinate: step 4/4. Catalyzes the decarboxylation of four acetate groups of uroporphyrinogen-III to yield coproporphyrinogen-III. This Sulfurovum sp. (strain NBC37-1) protein is Uroporphyrinogen decarboxylase.